A 99-amino-acid polypeptide reads, in one-letter code: Small ribosomal subunit protein bS18 (99 aa).

The segment at 1–25 (MAESKGRPGSASQRPTGGDKAIAGQ) is disordered.

The protein belongs to the bacterial ribosomal protein bS18 family. In terms of assembly, part of the 30S ribosomal subunit. Forms a tight heterodimer with protein bS6.

Binds as a heterodimer with protein bS6 to the central domain of the 16S rRNA, where it helps stabilize the platform of the 30S subunit. The polypeptide is Small ribosomal subunit protein bS18 (Solibacter usitatus (strain Ellin6076)).